The sequence spans 828 residues: Periplasmic nitrate reductase (828 aa).

The tat-type signal signal peptide spans 1–31; the sequence is MKLSRRSFMKANAVAAVAAAAGLSVPGVARA. The 4Fe-4S Mo/W bis-MGD-type domain maps to 39 to 95; that stretch reads IKWDKAPCRFCGTGCGVLVGTQQGRVVACQGDPDAPVNRGLNCIKGYFLPKIMYGKD. Residues C46, C49, C53, and C81 each coordinate [4Fe-4S] cluster. Mo-bis(molybdopterin guanine dinucleotide)-binding positions include K83, Q150, N175, C179, 212 to 219, 243 to 247, 262 to 264, M372, Q376, N482, 508 to 509, K531, D558, and 718 to 727; these read WGANMAEM, STYQH, QSD, SD, and TGRVLEHWHT. Residue F794 coordinates substrate. 2 residues coordinate Mo-bis(molybdopterin guanine dinucleotide): N802 and K819.

It belongs to the prokaryotic molybdopterin-containing oxidoreductase family. NasA/NapA/NarB subfamily. In terms of assembly, component of the periplasmic nitrate reductase NapAB complex composed of NapA and NapB. [4Fe-4S] cluster serves as cofactor. The cofactor is Mo-bis(molybdopterin guanine dinucleotide). Post-translationally, predicted to be exported by the Tat system. The position of the signal peptide cleavage has not been experimentally proven.

It localises to the periplasm. It carries out the reaction 2 Fe(II)-[cytochrome] + nitrate + 2 H(+) = 2 Fe(III)-[cytochrome] + nitrite + H2O. In terms of biological role, catalytic subunit of the periplasmic nitrate reductase complex NapAB. Receives electrons from NapB and catalyzes the reduction of nitrate to nitrite. The protein is Periplasmic nitrate reductase of Shigella boydii serotype 4 (strain Sb227).